Here is a 462-residue protein sequence, read N- to C-terminus: MTLAVIGLFTLFTSIIAITPAREFVSLAEREDALLRELFQGYQRWVRPVQHANHSVKVRFGLKISQLVDVDEKNQLMTTNVWLWQEWLDYKLRWNPENYGGITSIRVPSESIWLPDIVLYENADGRFEGSLMTKAIVRYNGMITWTPPASYKSACTMDVTFFPFDRQNCSMKFGSWTYDGNMVKLVLINQQVDRSDFFDNGEWEILSATGVKGSRQDSHLSYPYITYSFILKRLPLFYTLFLIIPCLGLSFLTVLVFYLPSDEGEKVSLSTSVLVSLTVFLLVIEEIIPSSSKVIPLIGEYLLFIMIFVTLSIIVTIFVINVHHRSSATYHPMSPWVRSLFLQRLPHLLCMRGNTDRYHYPELEPHSPDLKPRNKKGPPGPEGEGQALINLLEQATNSVRYISRHIKKEHFIREVVQDWKFVAQVLDRIFLWTFLTVSVLGTILIFTPALKMFLRTPPPPSP.

Positions 1–30 are cleaved as a signal peptide; it reads MTLAVIGLFTLFTSIIAITPAREFVSLAER. Residues 31 to 234 are Extracellular-facing; sequence EDALLRELFQ…ITYSFILKRL (204 aa). N53 and N168 each carry an N-linked (GlcNAc...) asparagine glycan. An intrachain disulfide couples C155 to C169. Transmembrane regions (helical) follow at residues 235–259, 267–284, and 301–322; these read PLFYTLFLIIPCLGLSFLTVLVFYL, VSLSTSVLVSLTVFLLVI, and YLLFIMIFVTLSIIVTIFVINV. At 323-428 the chain is on the cytoplasmic side; the sequence is HHRSSATYHP…WKFVAQVLDR (106 aa). A compositionally biased stretch (basic and acidic residues) spans 362–372; it reads ELEPHSPDLKP. The interval 362 to 384 is disordered; the sequence is ELEPHSPDLKPRNKKGPPGPEGE. Residues 429–446 form a helical membrane-spanning segment; that stretch reads IFLWTFLTVSVLGTILIF.

This sequence belongs to the ligand-gated ion channel (TC 1.A.9) family. Acetylcholine receptor (TC 1.A.9.1) subfamily. In terms of assembly, neuronal AChR seems to be composed of two different type of subunits: alpha and beta.

The protein localises to the postsynaptic cell membrane. Its subcellular location is the cell membrane. Its function is as follows. After binding acetylcholine, the AChR responds by an extensive change in conformation that affects all subunits and leads to opening of an ion-conducting channel across the plasma membrane. The protein is Neuronal acetylcholine receptor subunit non-alpha-2 of Carassius auratus (Goldfish).